A 430-amino-acid chain; its full sequence is MAASHSPFTRFVHGESFAGLLLVGTALIAFIWANSPWRETYFAAQHTHLALSLGDARLDLSLEHWVNDGLMAVFFLLVGLEIKRELLIGELSSRRRVALAVTAALGGMLVPAALYTALNVGGPGLSGWGVPMSTDIAFALGVLALLGSRVPLGLKVFLTALAIVDDLGAVLVIALFYTSGLNLTFLTLAALTWGAALYAGWRGAFSLKLYGVLGVLLWFFVLKSGLHATIAGVLLAFAVPIRRPDPADYLASLAEAAKPGRGEVVGARLRDLEDLLERAQSPLHRLEHALHPFVTFLVLPVFALTNAGVPVAAGGFGSVSLGVLLGLLLGKPLGVVGGAWLAVRMGMASLPRRVNWGHMVGSGLLAGIGFTMSLFVSNLAFDDSVLLTQAKLGVLLASVLAALLGAGWLLLGIRGQAPSGRDDVQVDLPR.

Transmembrane regions (helical) follow at residues 11–31, 60–80, 97–117, 127–147, 181–201, 215–235, 288–308, 309–329, 356–376, and 393–413; these read FVHGESFAGLLLVGTALIAFI, LSLEHWVNDGLMAVFFLLVGL, VALAVTAALGGMLVPAALYTA, GWGVPMSTDIAFALGVLALLG, LNLTFLTLAALTWGAALYAGW, VLLWFFVLKSGLHATIAGVLL, HALHPFVTFLVLPVFALTNAG, VPVAAGGFGSVSLGVLLGLLL, WGHMVGSGLLAGIGFTMSLFV, and GVLLASVLAALLGAGWLLLGI.

This sequence belongs to the NhaA Na(+)/H(+) (TC 2.A.33) antiporter family.

It is found in the cell membrane. The enzyme catalyses Na(+)(in) + 2 H(+)(out) = Na(+)(out) + 2 H(+)(in). In terms of biological role, na(+)/H(+) antiporter that extrudes sodium in exchange for external protons. The sequence is that of Na(+)/H(+) antiporter NhaA 2 from Deinococcus geothermalis (strain DSM 11300 / CIP 105573 / AG-3a).